A 569-amino-acid polypeptide reads, in one-letter code: 2-isopropylmalate synthase (569 aa).

One can recognise a Pyruvate carboxyltransferase domain in the interval 31–305 (PRWMSTDLRD…APELDFSDID (275 aa)). Mg(2+) contacts are provided by aspartate 40, histidine 244, histidine 246, and asparagine 280. The interval 437-569 (RETPLRYVSH…TASASAATEA (133 aa)) is regulatory domain.

It belongs to the alpha-IPM synthase/homocitrate synthase family. LeuA type 2 subfamily. As to quaternary structure, homodimer. Requires Mg(2+) as cofactor.

The protein localises to the cytoplasm. It carries out the reaction 3-methyl-2-oxobutanoate + acetyl-CoA + H2O = (2S)-2-isopropylmalate + CoA + H(+). Its pathway is amino-acid biosynthesis; L-leucine biosynthesis; L-leucine from 3-methyl-2-oxobutanoate: step 1/4. Its function is as follows. Catalyzes the condensation of the acetyl group of acetyl-CoA with 3-methyl-2-oxobutanoate (2-ketoisovalerate) to form 3-carboxy-3-hydroxy-4-methylpentanoate (2-isopropylmalate). The polypeptide is 2-isopropylmalate synthase (Cupriavidus taiwanensis (strain DSM 17343 / BCRC 17206 / CCUG 44338 / CIP 107171 / LMG 19424 / R1) (Ralstonia taiwanensis (strain LMG 19424))).